We begin with the raw amino-acid sequence, 244 residues long: Recombination directionality factor (244 aa).

The segment at 1–34 (MAKRSIWAGDEDNKPKKRETYADDTVGRFHSGYS) is disordered. Basic and acidic residues predominate over residues 11-27 (EDNKPKKRETYADDTVG).

In terms of assembly, interacts with the integrase.

Its function is as follows. Recombination directionality factor that interacts directly with the integrase tetramer to activate excision and inhibit integration. The sequence is that of Recombination directionality factor from Streptomyces coelicolor (Bacteriophage phi-C31).